A 437-amino-acid polypeptide reads, in one-letter code: UDP-N-acetylmuramate--L-alanine ligase (437 aa).

108–114 (GAHGKTS) lines the ATP pocket.

The protein belongs to the MurCDEF family.

The protein resides in the cytoplasm. The enzyme catalyses UDP-N-acetyl-alpha-D-muramate + L-alanine + ATP = UDP-N-acetyl-alpha-D-muramoyl-L-alanine + ADP + phosphate + H(+). The protein operates within cell wall biogenesis; peptidoglycan biosynthesis. Functionally, cell wall formation. The polypeptide is UDP-N-acetylmuramate--L-alanine ligase (Staphylococcus saprophyticus subsp. saprophyticus (strain ATCC 15305 / DSM 20229 / NCIMB 8711 / NCTC 7292 / S-41)).